Consider the following 351-residue polypeptide: Glucose 1-dehydrogenase 1 (351 aa).

Residue Cys39 participates in Zn(2+) binding. A substrate-binding site is contributed by Thr41. Residues His64 and Glu65 each contribute to the Zn(2+) site. Positions 113 and 149 each coordinate substrate. Zn(2+) is bound at residue Glu149. NADP(+) contacts are provided by residues 182 to 185, 265 to 267, and 292 to 294; these read AGPI, LGI, and ATN. Asn294 provides a ligand contact to substrate.

Belongs to the zinc-containing alcohol dehydrogenase family. Glucose 1-dehydrogenase subfamily. Requires Zn(2+) as cofactor.

The catalysed reaction is D-glucose + NAD(+) = D-glucono-1,5-lactone + NADH + H(+). It catalyses the reaction D-glucose + NADP(+) = D-glucono-1,5-lactone + NADPH + H(+). Functionally, catalyzes the NAD(P)(+)-dependent oxidation of D-glucose to D-gluconate via gluconolactone. Can utilize both NAD(+) and NADP(+) as electron acceptor. Is involved in the degradation of glucose through a non-phosphorylative variant of the Entner-Doudoroff pathway. This is Glucose 1-dehydrogenase 1 from Vulcanisaeta moutnovskia (strain 768-28).